The chain runs to 856 residues: V-type proton ATPase 116 kDa subunit a 2 (856 aa).

The Cytoplasmic portion of the chain corresponds to 1-393; it reads MGSLFRSESM…DAYGVGSYRE (393 aa). Residues 394 to 412 form a helical membrane-spanning segment; sequence VNPALFTIITFPFLFAVMF. The Vacuolar segment spans residues 413–414; it reads GD. A helical transmembrane segment spans residues 415–431; sequence FGHGFVMFLFALLLVLN. Residues 432–445 are Cytoplasmic-facing; that stretch reads ENHPRLSQSQEILR. Residues 446–475 traverse the membrane as a helical segment; sequence MFFDGRYILLLMGLFSVYTGLIYNDCFSKS. Residues 476–549 lie on the Vacuolar side of the membrane; that stretch reads VNLFGSGWNV…ATNRLTFLNS (74 aa). Residues 550–569 traverse the membrane as a helical segment; that stretch reads FKMKMSVILGIFHMTFGVVL. At 570-587 the chain is on the cytoplasmic side; that stretch reads GIFNHLHFRKKFNVYLVS. A helical transmembrane segment spans residues 588-608; sequence VPEILFMLCIFGYLIFMIIYK. Over 609 to 651 the chain is Vacuolar; sequence WLAYSAETSREAPSILIEFINMFLFPTSKTHGLYPGQAHVQRV. A helical transmembrane segment spans residues 652–671; that stretch reads LVALTVLAVPVLFLGKPLFL. Over 672-739 the chain is Cytoplasmic; it reads LWLHNGRNCF…EILMTQAIHS (68 aa). A phosphoserine mark is found at serine 695 and serine 700. A helical transmembrane segment spans residues 740 to 764; it reads IEYCLGCISNTASYLRLWALSLAHA. Topologically, residues 765 to 785 are vacuolar; the sequence is QLSDVLWAMLMRVGLRVDTTY. Residues 786-824 traverse the membrane as a helical segment; sequence GVLLLLPVMAFFAVLTIFILLVMEGLSAFLHAIRLHWVE. The Cytoplasmic portion of the chain corresponds to 825 to 856; the sequence is FQNKFYVGAGTKFVPFSFSLLSSKFSNDDSIA.

It belongs to the V-ATPase 116 kDa subunit family. V-ATPase is a heteromultimeric enzyme made up of two complexes: the ATP-hydrolytic V1 complex and the proton translocation V0 complex. The V1 complex consists of three catalytic AB heterodimers that form a heterohexamer, three peripheral stalks each consisting of EG heterodimers, one central rotor including subunits D and F, and the regulatory subunits C and H. The proton translocation complex V0 consists of the proton transport subunit a, a ring of proteolipid subunits c9c'', rotary subunit d, subunits e and f, and the accessory subunits ATP6AP1/Ac45 and ATP6AP2/PRR. Directly interacts with PSCD2 through its N-terminal cytosolic tail in an intra-endosomal acidification-dependent manner. Disruption of this interaction results in the inhibition of endocytosis. Interacts with SPAAR. As to expression, relatively high expression in kidney and liver. Lower levels in the spleen, testis, and skeletal muscle. Also expressed in the thymus.

The protein localises to the cell membrane. Its subcellular location is the endosome membrane. In terms of biological role, subunit of the V0 complex of vacuolar(H+)-ATPase (V-ATPase), a multisubunit enzyme composed of a peripheral complex (V1) that hydrolyzes ATP and a membrane integral complex (V0) that translocates protons. V-ATPase is responsible for acidifying and maintaining the pH of intracellular compartments and in some cell types, is targeted to the plasma membrane, where it is responsible for acidifying the extracellular environment. Essential component of the endosomal pH-sensing machinery. May play a role in maintaining the Golgi functions, such as glycosylation maturation, by controlling the Golgi pH. In aerobic conditions, involved in intracellular iron homeostasis, thus triggering the activity of Fe(2+) prolyl hydroxylase (PHD) enzymes, and leading to HIF1A hydroxylation and subsequent proteasomal degradation. This is V-type proton ATPase 116 kDa subunit a 2 (Atp6v0a2) from Mus musculus (Mouse).